Reading from the N-terminus, the 349-residue chain is Ion-translocating oxidoreductase complex subunit D (349 aa).

Transmembrane regions (helical) follow at residues 36 to 56 (CAFF…VALS), 77 to 99 (SAML…WMIV), and 124 to 144 (AMAA…SWIA). T185 bears the FMN phosphoryl threonine mark. 5 helical membrane passes run 212 to 232 (GTGV…LVLL), 239 to 259 (WHIS…GFLL), 265 to 285 (ASPL…FIAT), 291 to 311 (ATSP…VYVI), and 315 to 335 (GGYP…APFI).

It belongs to the NqrB/RnfD family. In terms of assembly, the complex is composed of six subunits: RnfA, RnfB, RnfC, RnfD, RnfE and RnfG. Requires FMN as cofactor.

Its subcellular location is the cell inner membrane. In terms of biological role, part of a membrane-bound complex that couples electron transfer with translocation of ions across the membrane. The protein is Ion-translocating oxidoreductase complex subunit D of Shewanella sp. (strain MR-4).